Consider the following 468-residue polypeptide: MSENNNKIPSFGLKSNVNSTYNHLETVAKLSIDEKLVNEPPKFVDIKTITPLNVENNGIAQKRIISKRDLRSFHTSSTYSELLNFIIQLSLDIQGKSLKSNFTITKNINSIIVLLNQLDQYITDIPPKQIRTRFGNESFVEWFNKVEKETPKLLFNLINDNPLNTPITNEVPIIYNEISTYLQNSWGDKQRIDYGSGHELNFICFLLCLVKIKFIKREEYELLVLIIFNKYLNMMRRLQESYWLEPAGSHGVWGLDDYHFLPFLFGSSQLIEHKYIRPKSIRNDEIVNSSFSDEYMYLGCIRFIGKVKSGGSLLEHSPMLVDISGVKNWSKVNEGMIKMFKSEVLGKLPIMQHMFFASIIQYIDNPDIIETDEEINQRKPIVTHSFSSCGCINRVPSMFAVANTDKILASTSTTTNNNNNNITSGDHCNDNEQQCSETHNHDHNHNHNHNHNHPPPPPQQQRSYFPLD.

Low complexity predominate over residues 412-424 (STTTNNNNNNITS). The tract at residues 412–468 (STTTNNNNNNITSGDHCNDNEQQCSETHNHDHNHNHNHNHNHPPPPPQQQRSYFPLD) is disordered.

It belongs to the PTPA-type PPIase family.

The protein resides in the cytoplasm. The enzyme catalyses [protein]-peptidylproline (omega=180) = [protein]-peptidylproline (omega=0). In terms of biological role, PPIases accelerate the folding of proteins. It catalyzes the cis-trans isomerization of proline imidic peptide bonds in oligopeptides. Acts as a regulatory subunit for PP2A-like phosphatases modulating their activity or substrate specificity, probably by inducing a conformational change in the catalytic subunit, a direct target of the PPIase. This is Probable serine/threonine-protein phosphatase 2A activator 2 (ppp2r4B) from Dictyostelium discoideum (Social amoeba).